A 211-amino-acid chain; its full sequence is 3-demethoxyubiquinol 3-hydroxylase (211 aa).

6 residues coordinate Fe cation: Glu60, Glu90, His93, Glu142, Glu174, and His177.

The protein belongs to the COQ7 family. Requires Fe cation as cofactor.

It localises to the cell membrane. The catalysed reaction is a 5-methoxy-2-methyl-3-(all-trans-polyprenyl)benzene-1,4-diol + AH2 + O2 = a 3-demethylubiquinol + A + H2O. Its pathway is cofactor biosynthesis; ubiquinone biosynthesis. Its function is as follows. Catalyzes the hydroxylation of 2-nonaprenyl-3-methyl-6-methoxy-1,4-benzoquinol during ubiquinone biosynthesis. In Acinetobacter baylyi (strain ATCC 33305 / BD413 / ADP1), this protein is 3-demethoxyubiquinol 3-hydroxylase.